Consider the following 199-residue polypeptide: Small ribosomal subunit protein eS1 (199 aa).

The protein belongs to the eukaryotic ribosomal protein eS1 family.

The polypeptide is Small ribosomal subunit protein eS1 (Pyrococcus horikoshii (strain ATCC 700860 / DSM 12428 / JCM 9974 / NBRC 100139 / OT-3)).